Reading from the N-terminus, the 165-residue chain is Protein AIG2 C (165 aa).

14-19 contributes to the substrate binding site; it reads YGSILE. Glu-82 functions as the Proton acceptor in the catalytic mechanism.

The protein belongs to the gamma-glutamylcyclotransferase family. Expressed in floral organs, leaves, stems and roots.

Its function is as follows. Putative gamma-glutamylcyclotransferase. The polypeptide is Protein AIG2 C (Arabidopsis thaliana (Mouse-ear cress)).